We begin with the raw amino-acid sequence, 781 residues long: Ubiquitin carboxyl-terminal hydrolase 14 (781 aa).

The UBP-type zinc finger occupies 169-279; sequence STCPHTENFQ…SALQIYGINI (111 aa). Zn(2+)-binding residues include C171, H173, C192, C195, C204, C207, C212, H224, H228, H235, C253, and C256. The region spanning 323-781 is the USP domain; the sequence is CGLINLGNSC…NGYIYFYTRC (459 aa). C332 functions as the Nucleophile in the catalytic mechanism. UBA domains lie at 576 to 626 and 649 to 689; these read DEDE…LFQH and EVDE…VFNN. H737 functions as the Proton acceptor in the catalytic mechanism.

The protein belongs to the peptidase C19 family.

The protein localises to the cytoplasm. It is found in the nucleus. It carries out the reaction Thiol-dependent hydrolysis of ester, thioester, amide, peptide and isopeptide bonds formed by the C-terminal Gly of ubiquitin (a 76-residue protein attached to proteins as an intracellular targeting signal).. Functionally, required for the adaptation to the presence of glucose in the growth medium; mediates the degradation of enzymes involved in gluconeogenesis when cells are shifted to glucose-containing medium. Required for proteasome-dependent catabolite degradation of fructose-1,6-bisphosphatase (FBP1). Accelerates proteasomal breakdown of ubiquitinated proteins as it disassembles free ubiquitin chains that would compete with ubiquitinated proteins to bind to the proteasome. The sequence is that of Ubiquitin carboxyl-terminal hydrolase 14 (UBP14) from Saccharomyces cerevisiae (strain ATCC 204508 / S288c) (Baker's yeast).